Reading from the N-terminus, the 190-residue chain is Threonylcarbamoyl-AMP synthase (190 aa).

The YrdC-like domain maps to 7-190 (GDAIAAAIDV…ALTGELFRQG (184 aa)).

This sequence belongs to the SUA5 family. TsaC subfamily.

Its subcellular location is the cytoplasm. It carries out the reaction L-threonine + hydrogencarbonate + ATP = L-threonylcarbamoyladenylate + diphosphate + H2O. Required for the formation of a threonylcarbamoyl group on adenosine at position 37 (t(6)A37) in tRNAs that read codons beginning with adenine. Catalyzes the conversion of L-threonine, HCO(3)(-)/CO(2) and ATP to give threonylcarbamoyl-AMP (TC-AMP) as the acyladenylate intermediate, with the release of diphosphate. The sequence is that of Threonylcarbamoyl-AMP synthase from Escherichia coli O6:H1 (strain CFT073 / ATCC 700928 / UPEC).